Reading from the N-terminus, the 192-residue chain is uncharacterized protein (192 aa).

One can recognise a Nudix hydrolase domain in the interval 29 to 160 (HRQAAVLIPI…PLDIYRRGDS (132 aa)). The short motif at 67-89 (GAVDDTDASVIAAALREAEEEVA) is the Nudix box element. Positions 83 and 87 each coordinate Mg(2+).

It belongs to the Nudix hydrolase family. PCD1 subfamily. It depends on Mn(2+) as a cofactor. The cofactor is Mg(2+).

Its function is as follows. Probably mediates the hydrolysis of some nucleoside diphosphate derivatives. This is an uncharacterized protein from Shigella flexneri serotype 5b (strain 8401).